The chain runs to 88 residues: Small ribosomal subunit protein uS15 (88 aa).

Positions 1-12 are enriched in polar residues; the sequence is MLTNTDRQQVIA. Positions 1–23 are disordered; the sequence is MLTNTDRQQVIAQYQRAPGDTGS.

Belongs to the universal ribosomal protein uS15 family. Part of the 30S ribosomal subunit. Forms a bridge to the 50S subunit in the 70S ribosome, contacting the 23S rRNA.

In terms of biological role, one of the primary rRNA binding proteins, it binds directly to 16S rRNA where it helps nucleate assembly of the platform of the 30S subunit by binding and bridging several RNA helices of the 16S rRNA. Functionally, forms an intersubunit bridge (bridge B4) with the 23S rRNA of the 50S subunit in the ribosome. This chain is Small ribosomal subunit protein uS15, found in Psychrobacter sp. (strain PRwf-1).